A 575-amino-acid chain; its full sequence is MPTTDSARAADIKQPDIKPRSRDVTDGLEKAAARGMLRAVGMGDEDFAKPQIGVASSWNEITPCNLSLDRLAKAVKEGVFAAGGYPLEFGTISVSDGISMGHEGMHFSLVSREVIADSVETVMQAERLDGSVLLAGCDKSLPGMLMAAARLDLASVFLYAGSILPGVAKLSDGSEREVTIIDAFEAVGACARGLMPREDVDAIERAICPGEGACGGMYTANTMASAAEALGMSLPGSAAPPATDRRRDGFARRSGQAVVELLRRGITARDILTKEAFENAIAVVMAFGGSTNAVLHLLAIAHEADVALSLDDFSRIGSKVPHLADVKPFGRHVMTDVDHIGGVPVMMKALLDAGLLNGDCLTVTGATVAQNLAAIAPPDPDGKVLRALSDPLHPTGGITILRGSLAPEGAVVKSAGFDSDVFEGTARVFDGERAALDALEDGTITKGDAVVIRYEGPKGGPGMREMLAITGAIKGAGLGKDVLLLTDGRFSGGTTGLCVGHIAPEAVDAGPIAFLRDGDRIRLDVANRVLDVLVDPAEFDSRRTAFTPPPPRYKTGVLAKYVKLVGSAAIGAVCG.

A disordered region spans residues 1 to 25 (MPTTDSARAADIKQPDIKPRSRDVT). The segment covering 8 to 25 (RAADIKQPDIKPRSRDVT) has biased composition (basic and acidic residues). Cysteine 64 contributes to the [2Fe-2S] cluster binding site. Aspartate 96 lines the Mg(2+) pocket. Cysteine 137 is a binding site for [2Fe-2S] cluster. Mg(2+)-binding residues include aspartate 138 and lysine 139. An N6-carboxylysine modification is found at lysine 139. A [2Fe-2S] cluster-binding site is contributed by cysteine 214. Residue glutamate 465 participates in Mg(2+) binding. Catalysis depends on serine 491, which acts as the Proton acceptor.

It belongs to the IlvD/Edd family. In terms of assembly, homodimer. The cofactor is [2Fe-2S] cluster. It depends on Mg(2+) as a cofactor.

It catalyses the reaction (2R)-2,3-dihydroxy-3-methylbutanoate = 3-methyl-2-oxobutanoate + H2O. It carries out the reaction (2R,3R)-2,3-dihydroxy-3-methylpentanoate = (S)-3-methyl-2-oxopentanoate + H2O. Its pathway is amino-acid biosynthesis; L-isoleucine biosynthesis; L-isoleucine from 2-oxobutanoate: step 3/4. It functions in the pathway amino-acid biosynthesis; L-valine biosynthesis; L-valine from pyruvate: step 3/4. Its function is as follows. Functions in the biosynthesis of branched-chain amino acids. Catalyzes the dehydration of (2R,3R)-2,3-dihydroxy-3-methylpentanoate (2,3-dihydroxy-3-methylvalerate) into 2-oxo-3-methylpentanoate (2-oxo-3-methylvalerate) and of (2R)-2,3-dihydroxy-3-methylbutanoate (2,3-dihydroxyisovalerate) into 2-oxo-3-methylbutanoate (2-oxoisovalerate), the penultimate precursor to L-isoleucine and L-valine, respectively. This Mycobacterium avium (strain 104) protein is Dihydroxy-acid dehydratase.